We begin with the raw amino-acid sequence, 251 residues long: uncharacterized protein (251 aa).

Belongs to the FAM243 family.

This is an uncharacterized protein from Homo sapiens (Human).